A 268-amino-acid chain; its full sequence is HLA class II histocompatibility antigen, DQ beta 2 chain (268 aa).

A signal peptide spans 1–32; that stretch reads MSWKMALQIPGGFWAAAVTVMLVMLSTPVAEA. The segment at 33–126 is beta-1; the sequence is RDFPKDFLVQ…ELRTTLQRQV (94 aa). Residues 33–229 lie on the Extracellular side of the membrane; it reads RDFPKDFLVQ…RAQSESAQSK (197 aa). Cystine bridges form between cysteine 47–cysteine 110 and cysteine 148–cysteine 204. N-linked (GlcNAc...) asparagine glycosylation occurs at asparagine 51. The beta-2 stretch occupies residues 127 to 229; that stretch reads EPTVTISPSR…RAQSESAQSK (103 aa). Positions 128–216 constitute an Ig-like C1-type domain; the sequence is PTVTISPSRT…EHPSLQSPIT (89 aa). The chain crosses the membrane as a helical span at residues 230–250; the sequence is MLSGIGGFVLGLIFLGLGLII. At 251-268 the chain is on the cytoplasmic side; it reads RHRGQKGPRGPPPAGLLH.

This sequence belongs to the MHC class II family. Heterodimer of an alpha and a beta subunit; also referred as MHC class II molecule. Dimer formation with HLA-DQA2, but not with HLA-DQA1, is required for efficient exit from the endoplasmic reticulum (ER). In the ER, forms a heterononamer; 3 MHC class II molecules bind to a CD74 homotrimer (also known as invariant chain or HLA class II histocompatibility antigen gamma chain). In the endosomal/lysosomal system; CD74 undergoes sequential degradation by various proteases; leaving a small fragment termed CLIP on each MHC class II molecule. MHC class II molecule interacts with HLA_DM, and HLA_DO in B-cells, in order to release CLIP and facilitate the binding of antigenic peptides. Association with HLA-DMA also occurs in skin Langerhans cells, in post-Golgi compartments. Restricted to skin Langerhans cells (at protein level).

It localises to the cell membrane. Its subcellular location is the endoplasmic reticulum membrane. The protein resides in the golgi apparatus. It is found in the trans-Golgi network membrane. The protein localises to the endosome membrane. It localises to the lysosome membrane. Its function is as follows. Binds peptides derived from antigens that access the endocytic route of antigen presenting cells (APC) and presents them on the cell surface for recognition by the CD4 T-cells. The peptide binding cleft accommodates peptides of 10-30 residues. The peptides presented by MHC class II molecules are generated mostly by degradation of proteins that access the endocytic route, where they are processed by lysosomal proteases and other hydrolases. Exogenous antigens that have been endocytosed by the APC are thus readily available for presentation via MHC II molecules, and for this reason this antigen presentation pathway is usually referred to as exogenous. As membrane proteins on their way to degradation in lysosomes as part of their normal turn-over are also contained in the endosomal/lysosomal compartments, exogenous antigens must compete with those derived from endogenous components. Autophagy is also a source of endogenous peptides, autophagosomes constitutively fuse with MHC class II loading compartments. In addition to APCs, other cells of the gastrointestinal tract, such as epithelial cells, express MHC class II molecules and CD74 and act as APCs, which is an unusual trait of the GI tract. To produce a MHC class II molecule that presents an antigen, three MHC class II molecules (heterodimers of an alpha and a beta chain) associate with a CD74 trimer in the ER to form a heterononamer. Soon after the entry of this complex into the endosomal/lysosomal system where antigen processing occurs, CD74 undergoes a sequential degradation by various proteases, including CTSS and CTSL, leaving a small fragment termed CLIP (class-II-associated invariant chain peptide). The removal of CLIP is facilitated by HLA-DM via direct binding to the alpha-beta-CLIP complex so that CLIP is released. HLA-DM stabilizes MHC class II molecules until primary high affinity antigenic peptides are bound. The MHC II molecule bound to a peptide is then transported to the cell membrane surface. In B-cells, the interaction between HLA-DM and MHC class II molecules is regulated by HLA-DO. Primary dendritic cells (DCs) also to express HLA-DO. Lysosomal microenvironment has been implicated in the regulation of antigen loading into MHC II molecules, increased acidification produces increased proteolysis and efficient peptide loading. The chain is HLA class II histocompatibility antigen, DQ beta 2 chain (HLA-DQB2) from Homo sapiens (Human).